The primary structure comprises 1544 residues: GATOR complex protein Iml1 (1544 aa).

Disordered stretches follow at residues 615–649 (QAVP…CENG) and 1037–1072 (RRHS…EKRP). 2 stretches are compositionally biased toward polar residues: residues 623 to 639 (QAGQ…NNNN) and 1041 to 1057 (TSII…TNSP). Over residues 1058–1072 (FRERVGSNRLPEKRP) the composition is skewed to basic and acidic residues.

This sequence belongs to the IML1 family. Component of the GATOR complex consisting of mio, Nup44A/Seh1, Im11, Nplr3, Nplr2, Wdr24, Wdr59 and Sec13. Within the GATOR complex, probable component of the GATOR1 subcomplex which is likely composed of Iml1, Nplr2 and Nplr3.

In terms of biological role, an essential component of the GATOR subcomplex GATOR1 which functions as an inhibitor of the amino acid-sensing branch of the TORC1 signaling pathway. The two GATOR subcomplexes, GATOR1 and GATOR2, regulate the TORC1 pathway in order to mediate metabolic homeostasis, female gametogenesis and the response to amino acid limitation and complete starvation. The function of GATOR1 in negatively regulating the TORC1 pathway is essential for maintaining baseline levels of TORC1 activity under nutrient rich conditions, and for promoting survival during amino acid or complete starvation by inhibiting TORC1-dependent cell growth and promoting catabolic metabolism and autophagy. GATOR1 and GATOR2 act at different stages of oogenesis to regulate TORC1 in order to control meiotic entry and promote oocyte growth and development. After exactly four mitotic cyst divisions, the GATOR1 complex members (Iml1, Nprl2 and Nprl3) down-regulate TORC1 to slow cellular metabolism and promote the mitotic/meiotic transition. At later stages of oogenesis, the mio and Nup44A components of the GATOR2 complex inhibit GATOR1 and thus activate TORC1 to promote meiotic progression, and drive oocyte growth and development. The polypeptide is GATOR complex protein Iml1 (Drosophila melanogaster (Fruit fly)).